The sequence spans 310 residues: tRNA uridine(34) hydroxylase (310 aa).

One can recognise a Rhodanese domain in the interval 127 to 225; sequence KDKDTIVIDT…YLEDISKEES (99 aa). The Cysteine persulfide intermediate role is filled by Cys185.

This sequence belongs to the TrhO family.

The catalysed reaction is uridine(34) in tRNA + AH2 + O2 = 5-hydroxyuridine(34) in tRNA + A + H2O. In terms of biological role, catalyzes oxygen-dependent 5-hydroxyuridine (ho5U) modification at position 34 in tRNAs. The sequence is that of tRNA uridine(34) hydroxylase from Prochlorococcus marinus (strain MIT 9515).